Here is a 492-residue protein sequence, read N- to C-terminus: Catalase (492 aa).

Catalysis depends on residues His-65 and Asn-138. Position 348 (Tyr-348) interacts with heme.

This sequence belongs to the catalase family. As to quaternary structure, homotetramer. It depends on heme as a cofactor.

Its subcellular location is the cytoplasm. It is found in the cytosol. It localises to the peroxisome matrix. It catalyses the reaction 2 H2O2 = O2 + 2 H2O. Its function is as follows. Catalyzes the degradation of hydrogen peroxide (H(2)O(2)) generated by peroxisomal oxidases to water and oxygen, thereby protecting cells from the toxic effects of hydrogen peroxide. The protein is Catalase (CATA) of Triticum aestivum (Wheat).